A 1664-amino-acid chain; its full sequence is DNA-directed RNA polymerase I subunit RPA190 (1664 aa).

Zn(2+)-binding residues include cysteine 62, cysteine 65, cysteine 72, histidine 75, cysteine 102, cysteine 105, cysteine 233, and cysteine 236. The interval 280-310 (QAKKLDGSNEASANDEESFDVGRNPTTRPKT) is disordered. Mg(2+) is bound by residues aspartate 627, aspartate 629, and aspartate 631. Serine 889 bears the Phosphoserine mark. Residues 992-1004 (PQEYYFHCMAGRE) form a bridging helix region. Residues 1343–1423 (DIGVAVPRLQ…DSDSEDEDVD (81 aa)) are disordered. Basic and acidic residues predominate over residues 1393–1414 (ETMREAEKSSDEEGIDSDKESD). Serine 1636 carries the post-translational modification Phosphoserine.

The protein belongs to the RNA polymerase beta' chain family. Component of the RNA polymerase I (Pol I) complex consisting of 14 subunits: RPA135, RPA190, RPC40, RPA14, RPB5, RPO26, RPA43, RPB8, RPA12, RPB10, RPC19, RPC10, RPA49 and RPA34. The complex is composed of a horseshoe-shaped core containing ten subunits (RPA135, RPA190, RPB5, RPO26, RPB8, RPB10, RPC10, RPA12, RPC19 and RPC40) where RPA135 and RPA190 form the DNA-binding cleft. Outside of the core, RPA14 and RPA43 form the stalk that mediates interactions with transcription initiation factors and newly synthesized RNA.

Its subcellular location is the nucleus. It is found in the nucleolus. It catalyses the reaction RNA(n) + a ribonucleoside 5'-triphosphate = RNA(n+1) + diphosphate. Its function is as follows. DNA-dependent RNA polymerases catalyze the transcription of DNA into RNA using the four ribonucleoside triphosphates as substrates. Component of RNA polymerase I (Pol I) which synthesizes ribosomal RNA precursors. Besides, RNA polymerase I has intrinsic RNA cleavage activity. RPA190 and RPA135 both contribute to the polymerase catalytic activity and together form the Pol I active center. In addition, subunit RPA12 contributes a catalytic zinc ribbon that is required for RNA cleavage by Pol I. A single stranded DNA template strand of the promoter is positioned within the central active site cleft of Pol I. A bridging helix emanates from RPA190 and crosses the cleft near the catalytic site and is thought to promote translocation of Pol I by acting as a ratchet that moves the RNA-DNA hybrid through the active site by switching from straight to bent conformations at each step of nucleotide addition. This chain is DNA-directed RNA polymerase I subunit RPA190 (RPA190), found in Saccharomyces cerevisiae (strain ATCC 204508 / S288c) (Baker's yeast).